The following is a 654-amino-acid chain: Endoplasmic reticulum chaperone BiP (654 aa).

The N-terminal stretch at 1–18 is a signal peptide; it reads MKLSLVAAVLLLLCAARA. Residues 1–80 form a required for interaction with ELAPOR1 region; sequence MKLSLVAAVL…EGERLIGDAA (80 aa). 36–39 is a binding site for ATP; that stretch reads GTTY. Ser-86 bears the Phosphoserine mark. Position 96 (Lys-96) interacts with ATP. Lys-125 bears the N6-acetyllysine mark. The tract at residues 125–280 is nucleotide-binding (NBD); the sequence is KPYIQVDIGG…KKKTGKDVRK (156 aa). 3'-nitrotyrosine is present on Tyr-160. Lys-213 carries the N6-acetyllysine modification. 227–229 is an ATP binding site; that stretch reads GGT. Lys-271 is subject to N6-acetyllysine. 293–300 is a binding site for ATP; that stretch reads EKAKRALS. Position 326 is an N6-acetyllysine (Lys-326). Lys-352 participates in a covalent cross-link: Glycyl lysine isopeptide (Lys-Gly) (interchain with G-Cter in SUMO2). Lys-353 is subject to N6-acetyllysine; alternate. Lys-353 participates in a covalent cross-link: Glycyl lysine isopeptide (Lys-Gly) (interchain with G-Cter in SUMO1); alternate. Position 364-367 (364-367) interacts with ATP; that stretch reads GSTR. Residues 409-419 are interdomain linker; the sequence is QDTGDLVLLDV. Residues 420–500 are substrate-binding (SBD); the sequence is CPLTLGIETV…PRGVPQIEVT (81 aa). N6-succinyllysine is present on Lys-447. Omega-N-methylarginine is present on Arg-492. Thr-518 is modified (O-AMP-threonine; alternate). Thr-518 carries the post-translational modification Phosphothreonine; alternate. Position 585 is an N6,N6,N6-trimethyllysine; by METTL21A; in vitro (Lys-585). Lys-585 carries the post-translational modification N6,N6-dimethyllysine; alternate. Residue Lys-585 is modified to N6-methyllysine; alternate. An N6-methyllysine modification is found at Lys-591. The interval 632-654 is disordered; sequence SKLYGSAGPPPTGEEDTSERDEL. Residues Thr-643 and Thr-648 each carry the phosphothreonine modification. Positions 644 to 654 are enriched in acidic residues; sequence GEEDTSERDEL. Ser-649 carries the post-translational modification Phosphoserine. The short motif at 651 to 654 is the Prevents secretion from ER element; that stretch reads RDEL.

Belongs to the heat shock protein 70 family. In terms of assembly, monomer and homooligomer; homooligomerization via the interdomain linker inactivates the chaperone activity and acts as a storage of HSPA5/BiP molecules. Interacts with DNAJC1 (via J domain). Component of an EIF2 complex at least composed of CELF1/CUGBP1, CALR, CALR3, EIF2S1, EIF2S2, HSP90B1 and HSPA5. Part of a large chaperone multiprotein complex comprising DNAJB11, HSP90B1, HSPA5, HYOU, PDIA2, PDIA4, PDIA6, PPIB, SDF2L1, UGGT1 and very small amounts of ERP29, but not, or at very low levels, CALR nor CANX. Interacts with TMEM132A and TRIM21. May form a complex with ERLEC1, OS9, SEL1L and SYVN1. Interacts with DNAJC10. Interacts with DNAJB9/ERdj4; leading to recruit HSPA5/BiP to ERN1/IRE1. Interacts with ERN1/IRE1 (via luminal domain); the interaction takes place following interaction with DNAJB9/ERdj4 and leads to inactivate ERN1/IRE1, the interaction also competitively inhibits ERN1 interaction with MANF. Interacts directly with MANF (via SAP domain); the interaction inhibits ATP binding to HSPA5/BiP and subsequent nucleotide exchange. Interacts with EIF2AK3/PERK (via luminal domain); interaction leads to inactivate EIF2AK3/PERK. Interacts with MX1. Interacts with METTL23. Interacts with CEMIP; the interaction induces calcium leakage from the endoplasmic reticulum and cell migration. Interacts with PCSK4 form; the interaction takes place in the endoplasmic reticulum. Interacts with CIPC. Interacts with CCDC88B (via C-terminus); the interaction opposes ERN1-mediated JNK activation, protecting against apoptosis. Interacts with INPP5K; necessary for INPP5K localization at the endoplasmic reticulum. Interacts with MANF; the interaction is direct. Interacts with LOXL2; leading to activate the ERN1/IRE1-XBP1 pathway of the unfolded protein response. Interacts with CLU under stressed condition; interaction increases CLU protein stability; facilitates its retrotranslocation and redistribution to the mitochondria; cooperatively suppress stress-induced apoptosis by stabilizing mitochondrial membrane integrity. Interacts with CCDC47. Interacts with CLN3. Interacts with ELAPOR1; may regulate the function of HSPA5 in apoptosis and cell proliferation. Interacts with CASP7. Interacts with ILDR2; the interaction stabilizes ILDR2 expression. Interacts with ADAM7. In terms of processing, in unstressed cells, AMPylation at Thr-518 by FICD inactivates the chaperome activity: AMPylated form is locked in a relatively inert state and only weakly stimulated by J domain-containing proteins. In response to endoplasmic reticulum stress, de-AMPylation by the same protein, FICD, restores the chaperone activity.

Its subcellular location is the endoplasmic reticulum lumen. It localises to the melanosome. The protein localises to the cytoplasm. It is found in the cell surface. The enzyme catalyses ATP + H2O = ADP + phosphate + H(+). With respect to regulation, the chaperone activity is regulated by ATP-induced allosteric coupling of the nucleotide-binding (NBD) and substrate-binding (SBD) domains. In the ADP-bound and nucleotide-free (apo) states, the two domains have little interaction. In contrast, in the ATP-bound state the two domains are tightly coupled, which results in drastically accelerated kinetics in both binding and release of polypeptide substrates. J domain-containing co-chaperones (DNAJB9/ERdj4 or DNAJC10/ERdj5) stimulate the ATPase activity and are required for efficient substrate recognition by HSPA5/BiP. Homooligomerization inactivates participating HSPA5/BiP protomers and probably act as reservoirs to store HSPA5/BiP molecules when they are not needed by the cell. Its function is as follows. Endoplasmic reticulum chaperone that plays a key role in protein folding and quality control in the endoplasmic reticulum lumen. Involved in the correct folding of proteins and degradation of misfolded proteins via its interaction with DNAJC10/ERdj5, probably to facilitate the release of DNAJC10/ERdj5 from its substrate. Acts as a key repressor of the EIF2AK3/PERK and ERN1/IRE1-mediated unfolded protein response (UPR). In the unstressed endoplasmic reticulum, recruited by DNAJB9/ERdj4 to the luminal region of ERN1/IRE1, leading to disrupt the dimerization of ERN1/IRE1, thereby inactivating ERN1/IRE1. Also binds and inactivates EIF2AK3/PERK in unstressed cells. Accumulation of misfolded protein in the endoplasmic reticulum causes release of HSPA5/BiP from ERN1/IRE1 and EIF2AK3/PERK, allowing their homodimerization and subsequent activation. Plays an auxiliary role in post-translational transport of small presecretory proteins across endoplasmic reticulum (ER). May function as an allosteric modulator for SEC61 channel-forming translocon complex, likely cooperating with SEC62 to enable the productive insertion of these precursors into SEC61 channel. Appears to specifically regulate translocation of precursors having inhibitory residues in their mature region that weaken channel gating. May also play a role in apoptosis and cell proliferation. The sequence is that of Endoplasmic reticulum chaperone BiP from Ictidomys tridecemlineatus (Thirteen-lined ground squirrel).